The sequence spans 572 residues: Proline--tRNA ligase (572 aa).

It belongs to the class-II aminoacyl-tRNA synthetase family. ProS type 1 subfamily. Homodimer.

The protein resides in the cytoplasm. It catalyses the reaction tRNA(Pro) + L-proline + ATP = L-prolyl-tRNA(Pro) + AMP + diphosphate. In terms of biological role, catalyzes the attachment of proline to tRNA(Pro) in a two-step reaction: proline is first activated by ATP to form Pro-AMP and then transferred to the acceptor end of tRNA(Pro). As ProRS can inadvertently accommodate and process non-cognate amino acids such as alanine and cysteine, to avoid such errors it has two additional distinct editing activities against alanine. One activity is designated as 'pretransfer' editing and involves the tRNA(Pro)-independent hydrolysis of activated Ala-AMP. The other activity is designated 'posttransfer' editing and involves deacylation of mischarged Ala-tRNA(Pro). The misacylated Cys-tRNA(Pro) is not edited by ProRS. The polypeptide is Proline--tRNA ligase (Citrobacter koseri (strain ATCC BAA-895 / CDC 4225-83 / SGSC4696)).